The following is a 558-amino-acid chain: T-complex protein 1 subunit eta (558 aa).

Residues 524–558 (VRNPKSEQPKAPPGGLRRGGPQGMAGLAKNARLGK) form a disordered region.

It belongs to the TCP-1 chaperonin family. Heterooligomeric complex of about 850 to 900 kDa that forms two stacked rings, 12 to 16 nm in diameter.

It localises to the cytoplasm. Molecular chaperone; assists the folding of proteins upon ATP hydrolysis. Known to play a role, in vitro, in the folding of actin and tubulin. In Tetrahymena pyriformis, this protein is T-complex protein 1 subunit eta.